The chain runs to 475 residues: Vasculin-like protein 1 (475 aa).

Phosphoserine occurs at positions 49 and 76. Disordered stretches follow at residues 92 to 115 (NLSG…GSTG) and 160 to 191 (PSLN…SAKQ). Serine 202 carries the post-translational modification Phosphoserine. 2 disordered regions span residues 237 to 271 (LVPK…EAAL) and 292 to 318 (PKES…RRTT). Residues 294 to 311 (ESPSSTTPPIEISSSRLT) show a composition bias toward low complexity. Threonine 300 carries the post-translational modification Phosphothreonine. Phosphoserine is present on serine 383. A disordered region spans residues 456-475 (CEDSDTETSSSETSDDDAWK).

This sequence belongs to the vasculin family.

The protein localises to the nucleus. Functionally, possible transcription factor. This chain is Vasculin-like protein 1 (Gpbp1l1), found in Rattus norvegicus (Rat).